We begin with the raw amino-acid sequence, 461 residues long: MLKEYRTVKEVVGPLMLVDQVDGVSFDELVEIELHNGEKRRGKVLEINKDKAMVQLFEGSAGINLKGAKVKFLGKPLELGVSEDMLGRVFDGLGNPKDGGPKIIPDKKLDINGIPINPVARNYPDEFIQTGVSAIDGLNTLVRGQKLPVFSGSGLPHAELAAQIARQAKVLNSDSKFAVVFAAIGTTFEEAQYFIDDFTKTGAIDRAVLFINLANDPAIERIATPRMALTAAEYLAFEKGMHVLVIMTDITNYCEALREVSAARKEVPGRRGYPGYLYTDLSTLYERAGRILGKEGSITQIPILTMPEDDKTHPIPDLTGYITEGQIILSRELYKKGIMPPIDVLPSLSRLKDKGIGKGKTREDHADTMNQLFSAYAQGKQAKELSVILGESALSDTDKLYAKFADAFEEEYVSQGFTTNRTIEETLNLGWKLLTILPKSELKRIRDEYLEKYLNKAEESK.

It belongs to the ATPase alpha/beta chains family.

Its function is as follows. Produces ATP from ADP in the presence of a proton gradient across the membrane. The V-type beta chain is a regulatory subunit. This chain is V-type ATP synthase beta chain, found in Clostridium botulinum (strain ATCC 19397 / Type A).